We begin with the raw amino-acid sequence, 268 residues long: MAGAFFAGLASDVLGSGLGSLINAGAGAINQKVEFENNRKLQQASFQFSSTLQQASFQHDKEMLQAQIEATQKLQQDLMKVKQAVLLEGGFSTADAARGAINAPMTKALDWSGTRYWAPDARVTTYNAGHFSTPQSLGALTGRTNSRVSAPARSSPSALSNAPTATSLHSNQTVSTRLGSSAGSGTGVSSLSSAARTRSWVEDQNRNLSPFMRGALNTSFVTPPSSRSSSQSTVSTVPKEILDSWTGAFNTRRQPLFAHIRKRGESRV.

Polar residues predominate over residues 132–144; sequence STPQSLGALTGRT. Positions 132-199 are disordered; sequence STPQSLGALT…SLSSAARTRS (68 aa). Residues 145–163 are compositionally biased toward low complexity; that stretch reads NSRVSAPARSSPSALSNAP. Positions 164 to 178 are enriched in polar residues; the sequence is TATSLHSNQTVSTRL. Low complexity predominate over residues 179-195; it reads GSSAGSGTGVSSLSSAA.

It belongs to the norovirus VP2 family. In terms of assembly, homooligomer. The portal-like structure consists in 12 copies of VP2. Interacts with capsid protein VP1.

It localises to the virion. The protein localises to the host cytoplasm. In terms of biological role, minor structural protein that forms a portal-like structure at a unique three-fold axis of symmetry, following binding to the host receptor. The channel formed by VP2 may allow the delivery of the viral genome through the host endosomal membrane. The sequence is that of Minor capsid protein VP2 from Lordsdale virus (strain GII/Human/United Kingdom/Lordsdale/1993) (Human enteric calicivirus).